Reading from the N-terminus, the 219-residue chain is MKQEKAIVVFSGGQDSTTCLLWALRQFQEVEAVTFQYNQRHKQEIEVAKKIAAKLGVKHHLLDMELLNQLAPNALTRDDIEIEAKEGELPSTFVPGRNLVFLSFASILAYQVGARHIITGVCETDFSGYPDCRDEFVKSCNVTVNLAMERPFVIHTPLMWLNKAETWELADELDALDFVKNETLTCYNGIIADGCGECPACKLRANGYNEYMKMKKERA.

10-20 contributes to the ATP binding site; the sequence is FSGGQDSTTCL. Zn(2+)-binding residues include C186, C195, C198, and C201.

Belongs to the QueC family. In terms of assembly, homodimer. Zn(2+) serves as cofactor.

It catalyses the reaction 7-carboxy-7-deazaguanine + NH4(+) + ATP = 7-cyano-7-deazaguanine + ADP + phosphate + H2O + H(+). It participates in purine metabolism; 7-cyano-7-deazaguanine biosynthesis. Catalyzes the ATP-dependent conversion of 7-carboxy-7-deazaguanine (CDG) to 7-cyano-7-deazaguanine (preQ(0)). This Bacillus licheniformis (strain ATCC 14580 / DSM 13 / JCM 2505 / CCUG 7422 / NBRC 12200 / NCIMB 9375 / NCTC 10341 / NRRL NRS-1264 / Gibson 46) protein is 7-cyano-7-deazaguanine synthase.